A 566-amino-acid chain; its full sequence is Protein RocB (566 aa).

Functionally, involved in arginine degradative pathway. This chain is Protein RocB (rocB), found in Bacillus subtilis (strain 168).